Consider the following 3343-residue polypeptide: Cadherin-3 (3343 aa).

A signal peptide spans 1–26; that stretch reads MTIRIFFSIFLLNHLIFFHLFNFTHQ. Residue Asn-22 is glycosylated (N-linked (GlcNAc...) asparagine). Residues 27-3228 are Extracellular-facing; the sequence is FSEETIKFSV…LFSNFSNTTT (3202 aa). Cadherin domains follow at residues 28–117, 118–229, and 242–330; these read SEET…SPIF, PIDV…PPNF, and PNTK…EPNI. N-linked (GlcNAc...) asparagine glycans are attached at residues Asn-149, Asn-250, Asn-288, Asn-369, Asn-467, and Asn-612. A Cadherin 4 domain is found at 632-738; it reads ICQITEIHVL…EDVNDNVPKF (107 aa). N-linked (GlcNAc...) asparagine glycosylation is found at Asn-752, Asn-806, Asn-941, Asn-966, Asn-970, Asn-985, Asn-1042, Asn-1335, Asn-1425, Asn-1429, Asn-1557, Asn-1563, Asn-1597, Asn-1624, Asn-1695, and Asn-1702. The Cadherin 5 domain occupies 1279–1368; the sequence is RENELMFEIE…ADVNDNKPKI (90 aa). 3 Cadherin domains span residues 1545–1648, 1676–1756, and 1757–1857; these read DKAA…APRF, AEDL…TPEF, and ELSS…HPMI. Residues Asn-1895 and Asn-1900 are each glycosylated (N-linked (GlcNAc...) asparagine). Cadherin domains lie at 1954-2045, 2046-2145, and 2146-2245; these read TVSV…SPRF, DQQL…NAPR, and FSRI…APIF. Residues Asn-2053, Asn-2129, Asn-2203, Asn-2382, Asn-2391, Asn-2410, Asn-2414, Asn-2431, Asn-2527, Asn-2530, Asn-2564, Asn-2621, Asn-2665, Asn-2712, Asn-2798, Asn-2809, Asn-2927, Asn-2976, and Asn-3045 are each glycosylated (N-linked (GlcNAc...) asparagine). In terms of domain architecture, Laminin G-like spans 3040–3205; the sequence is EISVRNGTSH…SSTGTSRNEC (166 aa). A disulfide bridge links Cys-3172 with Cys-3205. N-linked (GlcNAc...) asparagine glycosylation is found at Asn-3222 and Asn-3225. Residues 3229–3250 traverse the membrane as a helical segment; sequence LILLITLALISLIGFSVCLLAI. At 3251-3343 the chain is on the cytoplasmic side; the sequence is RRRWRQKSPG…RDGHINMAYL (93 aa). The interval 3257-3277 is disordered; sequence KSPGDQKQTERSNGWTGHVMP.

As to expression, expressed in the anchor cell.

The protein localises to the cell membrane. It localises to the basolateral cell membrane. Its subcellular location is the cell junction. Its function is as follows. Cell adhesion protein involved in the control of epithelial morphogenesis. Together with metalloproteinase zmp-1 and hemicentin him-4, plays a role in anchor cell (AC) invasion during postembryonic vulval development. The protein is Cadherin-3 (cdh-3) of Caenorhabditis elegans.